Reading from the N-terminus, the 496-residue chain is Hemophilin secretion modulator (496 aa).

A signal peptide spans 1–19; sequence MKRTLLCCLTLLSCPFLYA. A run of 14 beta stranded transmembrane segments spans residues 198–208, 253–263, 268–277, 291–301, 305–315, 327–337, 341–351, 365–374, 380–389, 403–413, 418–427, 446–455, 462–472, and 486–495; these read WQGSVSAGYTY, DYEASLIKRYA, HGVALRALAF, TININAGYSYF, NQIGVSPLFEH, WGARAEWMHFI, KAFKLEAESKD, SSAFATFWKI, TFFGGLDVLD, QGVRLGLSKSW, NTTLLSSYRW, QNHTFVVQMP, MTPNLTYRYNH, and HNISFKLEHR.

The protein belongs to the Slam family.

It is found in the cell outer membrane. Functionally, part of a high affinity heme acquisition system. Mediates the secretion of the hemophilin HphA across the outer membrane into the extracellular environment. Plays a supporting role for full virulence. This is Hemophilin secretion modulator from Acinetobacter baumannii.